Consider the following 1049-residue polypeptide: Carbamoyl phosphate synthase large chain (1049 aa).

The carboxyphosphate synthetic domain stretch occupies residues 1–399 (MRESVRKVLV…SLQKAVRMLD (399 aa)). Positions 127, 167, 173, 174, 206, 208, 213, 239, 240, 241, 282, and 296 each coordinate ATP. An ATP-grasp 1 domain is found at 131-325 (RETMINVGLP…LAYVSAKLAL (195 aa)). Residues Q282, E296, and N298 each contribute to the Mg(2+) site. Mn(2+) is bound by residues Q282, E296, and N298. The tract at residues 400 to 548 (IGEPGVVGGK…LTYNGTEDDI (149 aa)) is oligomerization domain. Residues 549–930 (EFSEAGNKLL…LKSWLSSSPN (382 aa)) form a carbamoyl phosphate synthetic domain region. Residues 674-864 (SKLLDKLGIK…IISLALDGIL (191 aa)) enclose the ATP-grasp 2 domain. Residues R710, K749, L751, E756, G780, V781, H782, S783, Q823, and E835 each contribute to the ATP site. Mg(2+) contacts are provided by Q823, E835, and N837. Residues Q823, E835, and N837 each coordinate Mn(2+). The region spanning 930–1049 (NKIPNKEGIA…YEISEYGAGI (120 aa)) is the MGS-like domain. Positions 931 to 1049 (KIPNKEGIAL…YEISEYGAGI (119 aa)) are allosteric domain.

This sequence belongs to the CarB family. Composed of two chains; the small (or glutamine) chain promotes the hydrolysis of glutamine to ammonia, which is used by the large (or ammonia) chain to synthesize carbamoyl phosphate. Tetramer of heterodimers (alpha,beta)4. It depends on Mg(2+) as a cofactor. The cofactor is Mn(2+).

The catalysed reaction is hydrogencarbonate + L-glutamine + 2 ATP + H2O = carbamoyl phosphate + L-glutamate + 2 ADP + phosphate + 2 H(+). It carries out the reaction hydrogencarbonate + NH4(+) + 2 ATP = carbamoyl phosphate + 2 ADP + phosphate + 2 H(+). It participates in amino-acid biosynthesis; L-arginine biosynthesis; carbamoyl phosphate from bicarbonate: step 1/1. It functions in the pathway pyrimidine metabolism; UMP biosynthesis via de novo pathway; (S)-dihydroorotate from bicarbonate: step 1/3. Large subunit of the glutamine-dependent carbamoyl phosphate synthetase (CPSase). CPSase catalyzes the formation of carbamoyl phosphate from the ammonia moiety of glutamine, carbonate, and phosphate donated by ATP, constituting the first step of 2 biosynthetic pathways, one leading to arginine and/or urea and the other to pyrimidine nucleotides. The large subunit (synthetase) binds the substrates ammonia (free or transferred from glutamine from the small subunit), hydrogencarbonate and ATP and carries out an ATP-coupled ligase reaction, activating hydrogencarbonate by forming carboxy phosphate which reacts with ammonia to form carbamoyl phosphate. The protein is Carbamoyl phosphate synthase large chain of Sulfurisphaera tokodaii (strain DSM 16993 / JCM 10545 / NBRC 100140 / 7) (Sulfolobus tokodaii).